The sequence spans 352 residues: Heat-inducible transcription repressor HrcA (352 aa).

Belongs to the HrcA family.

Negative regulator of class I heat shock genes (grpE-dnaK-dnaJ and groELS operons). Prevents heat-shock induction of these operons. The protein is Heat-inducible transcription repressor HrcA of Chlorobium phaeobacteroides (strain BS1).